The primary structure comprises 500 residues: Glucokinase-1 (500 aa).

Ser2 carries the N-acetylserine modification. Ser2 bears the Phosphoserine mark. The 487-residue stretch at 12–498 folds into the Hexokinase domain; that stretch reads RAVIQAVDQI…SGVGAALCAL (487 aa). The interval 74 to 216 is hexokinase small subdomain; it reads NGTERGVLLA…MPMIKVVALT (143 aa). Lys110 serves as a coordination point for ATP. The tract at residues 158 to 184 is glucose-binding; it reads KLGFTFSYPVDQTSLNSGTLIRWTKGF. Residues 217 to 487 are hexokinase large subdomain; the sequence is NDTVGTYLSH…RKVHLKIAKD (271 aa). Ser470 carries the post-translational modification Phosphoserine. An ATP-binding site is contributed by 487 to 492; the sequence is DGSGVG.

It belongs to the hexokinase family. In terms of assembly, monomer.

The enzyme catalyses D-glucose + ATP = D-glucose 6-phosphate + ADP + H(+). It functions in the pathway carbohydrate metabolism; hexose metabolism. It participates in carbohydrate degradation; glycolysis; D-glyceraldehyde 3-phosphate and glycerone phosphate from D-glucose: step 1/4. Functionally, two isoenzymes, hexokinase-1 and hexokinase-2, can phosphorylate keto- and aldohexoses in yeast, whereas a third isoenzyme, GLK, is specific for aldohexoses. All glucose phosphorylating enzymes are involved in glucose uptake. In Saccharomyces cerevisiae (strain ATCC 204508 / S288c) (Baker's yeast), this protein is Glucokinase-1 (GLK1).